We begin with the raw amino-acid sequence, 213 residues long: A-type ATP synthase subunit D (213 aa).

This sequence belongs to the V-ATPase D subunit family. Has multiple subunits with at least A(3), B(3), C, D, E, F, H, I and proteolipid K(x).

The protein resides in the cell membrane. Component of the A-type ATP synthase that produces ATP from ADP in the presence of a proton gradient across the membrane. The chain is A-type ATP synthase subunit D from Saccharolobus islandicus (strain Y.N.15.51 / Yellowstone #2) (Sulfolobus islandicus).